Reading from the N-terminus, the 55-residue chain is Large ribosomal subunit protein bL33 (55 aa).

It belongs to the bacterial ribosomal protein bL33 family.

This chain is Large ribosomal subunit protein bL33, found in Photorhabdus laumondii subsp. laumondii (strain DSM 15139 / CIP 105565 / TT01) (Photorhabdus luminescens subsp. laumondii).